The chain runs to 113 residues: Gigasin-5 (113 aa).

As to expression, component of the organic matrix of calcified shell layers.

The chain is Gigasin-5 from Magallana gigas (Pacific oyster).